The sequence spans 124 residues: Large ribosomal subunit protein eL31 (124 aa).

It belongs to the eukaryotic ribosomal protein eL31 family. As to quaternary structure, component of the large ribosomal subunit.

It is found in the cytoplasm. In terms of biological role, component of the large ribosomal subunit. The ribosome is a large ribonucleoprotein complex responsible for the synthesis of proteins in the cell. The polypeptide is Large ribosomal subunit protein eL31 (rpl31) (Paralichthys olivaceus (Bastard halibut)).